A 287-amino-acid chain; its full sequence is ATP synthase gamma chain (287 aa).

The protein belongs to the ATPase gamma chain family. F-type ATPases have 2 components, CF(1) - the catalytic core - and CF(0) - the membrane proton channel. CF(1) has five subunits: alpha(3), beta(3), gamma(1), delta(1), epsilon(1). CF(0) has three main subunits: a, b and c.

It localises to the cell membrane. Produces ATP from ADP in the presence of a proton gradient across the membrane. The gamma chain is believed to be important in regulating ATPase activity and the flow of protons through the CF(0) complex. This Mycoplasmopsis agalactiae (strain NCTC 10123 / CIP 59.7 / PG2) (Mycoplasma agalactiae) protein is ATP synthase gamma chain.